Consider the following 471-residue polypeptide: A-type ATP synthase subunit B (471 aa).

It belongs to the ATPase alpha/beta chains family. In terms of assembly, has multiple subunits with at least A(3), B(3), C, D, E, F, H, I and proteolipid K(x).

It localises to the cell membrane. In terms of biological role, component of the A-type ATP synthase that produces ATP from ADP in the presence of a proton gradient across the membrane. The B chain is a regulatory subunit. The sequence is that of A-type ATP synthase subunit B from Halobacterium salinarum (strain ATCC 29341 / DSM 671 / R1).